Here is a 418-residue protein sequence, read N- to C-terminus: Gamma-glutamyl phosphate reductase (418 aa).

It belongs to the gamma-glutamyl phosphate reductase family.

Its subcellular location is the cytoplasm. It catalyses the reaction L-glutamate 5-semialdehyde + phosphate + NADP(+) = L-glutamyl 5-phosphate + NADPH + H(+). The protein operates within amino-acid biosynthesis; L-proline biosynthesis; L-glutamate 5-semialdehyde from L-glutamate: step 2/2. In terms of biological role, catalyzes the NADPH-dependent reduction of L-glutamate 5-phosphate into L-glutamate 5-semialdehyde and phosphate. The product spontaneously undergoes cyclization to form 1-pyrroline-5-carboxylate. The chain is Gamma-glutamyl phosphate reductase from Desulfotalea psychrophila (strain LSv54 / DSM 12343).